A 346-amino-acid chain; its full sequence is DNA-directed RNA polymerases I and III subunit RPAC1 (346 aa).

Ala-2 carries the post-translational modification N-acetylalanine.

Belongs to the archaeal Rpo3/eukaryotic RPB3 RNA polymerase subunit family. As to quaternary structure, component of the RNA polymerase I and RNA polymerase III complexes consisting of at least 13 and 17 subunits, respectively. Pol I complex consists of a ten-subunit catalytic core composed of POLR1A/RPA1, POLR1B/RPA2, POLR1C/RPAC1, POLR1D/RPAC2, POLR1H/RPA12, POLR2E/RPABC1, POLR2F/RPABC2, POLR2H/RPABC3, POLR2K/RPABC4 and POLR2L/RPABC5; a mobile stalk subunit POLR1F/RPA43 protruding from the core and additional subunits homologous to general transcription factors POLR1E/RPA49 and POLR1G/RPA34. Part of Pol I pre-initiation complex (PIC), in which Pol I core assembles with RRN3 and promoter-bound UTBF and SL1/TIF-IB complex. Pol III complex consists of a ten-subunit catalytic core composed of POLR3A/RPC1, POLR3B/RPC2, POLR1C/RPAC1, POLR1D/RPAC2, POLR3K/RPC10, POLR2E/RPABC1, POLR2F/RPABC2, POLR2H/RPABC3, POLR2K/RPABC4 and POLR2L/RPABC5; a mobile stalk composed of two subunits POLR3H/RPC8 and CRCP/RPC9, protruding from the core and functioning primarily in transcription initiation; and additional subunits homologous to general transcription factors of the RNA polymerase II machinery, POLR3C/RPC3-POLR3F/RPC6-POLR3G/RPC7 heterotrimer required for transcription initiation and POLR3D/RPC4-POLR3E/RPC5 heterodimer involved in both transcription initiation and termination.

The protein resides in the nucleus. The protein localises to the cytoplasm. Its subcellular location is the cytosol. DNA-dependent RNA polymerase catalyzes the transcription of DNA into RNA using the four ribonucleoside triphosphates as substrates. Common component of RNA polymerases I and III which synthesize ribosomal RNA precursors and short non-coding RNAs including 5S rRNA, snRNAs, tRNAs and miRNAs, respectively. POLR1C/RPAC1 is part of the polymerase core and may function as a clamp element that moves to open and close the cleft. The polypeptide is DNA-directed RNA polymerases I and III subunit RPAC1 (Mus musculus (Mouse)).